A 428-amino-acid chain; its full sequence is Enolase (428 aa).

A (2R)-2-phosphoglycerate-binding site is contributed by glutamine 163. Glutamate 205 functions as the Proton donor in the catalytic mechanism. Residues aspartate 242, glutamate 285, and aspartate 312 each contribute to the Mg(2+) site. (2R)-2-phosphoglycerate contacts are provided by lysine 337, arginine 366, serine 367, and lysine 388. Residue lysine 337 is the Proton acceptor of the active site.

It belongs to the enolase family. As to quaternary structure, component of the RNA degradosome, a multiprotein complex involved in RNA processing and mRNA degradation. It depends on Mg(2+) as a cofactor.

Its subcellular location is the cytoplasm. It is found in the secreted. The protein resides in the cell surface. It carries out the reaction (2R)-2-phosphoglycerate = phosphoenolpyruvate + H2O. Its pathway is carbohydrate degradation; glycolysis; pyruvate from D-glyceraldehyde 3-phosphate: step 4/5. Its function is as follows. Catalyzes the reversible conversion of 2-phosphoglycerate (2-PG) into phosphoenolpyruvate (PEP). It is essential for the degradation of carbohydrates via glycolysis. The protein is Enolase of Halorhodospira halophila (strain DSM 244 / SL1) (Ectothiorhodospira halophila (strain DSM 244 / SL1)).